Consider the following 532-residue polypeptide: CTP synthase (532 aa).

The amidoligase domain stretch occupies residues 1 to 267 (MTKFIFVTGG…DDIVLKILGL (267 aa)). Ser13 provides a ligand contact to CTP. UTP is bound at residue Ser13. 14–19 (SLGKGI) lines the ATP pocket. Tyr54 serves as a coordination point for L-glutamine. Asp71 is a binding site for ATP. The Mg(2+) site is built by Asp71 and Glu141. Residues 148–150 (DIE), 188–193 (KTKPTQ), and Lys224 each bind CTP. UTP-binding positions include 188-193 (KTKPTQ) and Lys224. The region spanning 292–532 (EIAIVGKYVE…EFVKATLANR (241 aa)) is the Glutamine amidotransferase type-1 domain. Gly354 is an L-glutamine binding site. Cys381 serves as the catalytic Nucleophile; for glutamine hydrolysis. L-glutamine contacts are provided by residues 382-385 (LGMQ), Glu405, and Arg462. Catalysis depends on residues His507 and Glu509.

The protein belongs to the CTP synthase family. In terms of assembly, homotetramer.

The enzyme catalyses UTP + L-glutamine + ATP + H2O = CTP + L-glutamate + ADP + phosphate + 2 H(+). The catalysed reaction is L-glutamine + H2O = L-glutamate + NH4(+). It carries out the reaction UTP + NH4(+) + ATP = CTP + ADP + phosphate + 2 H(+). It participates in pyrimidine metabolism; CTP biosynthesis via de novo pathway; CTP from UDP: step 2/2. With respect to regulation, allosterically activated by GTP, when glutamine is the substrate; GTP has no effect on the reaction when ammonia is the substrate. The allosteric effector GTP functions by stabilizing the protein conformation that binds the tetrahedral intermediate(s) formed during glutamine hydrolysis. Inhibited by the product CTP, via allosteric rather than competitive inhibition. In terms of biological role, catalyzes the ATP-dependent amination of UTP to CTP with either L-glutamine or ammonia as the source of nitrogen. Regulates intracellular CTP levels through interactions with the four ribonucleotide triphosphates. The chain is CTP synthase from Desulfitobacterium hafniense (strain Y51).